Consider the following 604-residue polypeptide: Protein CBFA2T1 (604 aa).

The disordered stretch occupies residues 32-114 (TEKHSTMPDS…SSSSLANQQL (83 aa)). Phosphoserine is present on S41. The segment covering 63–86 (QGAPRTSSFTPTTLTNGTSHSPTA) has biased composition (polar residues). Positions 95 to 114 (NGFSNGPSSSSSSSLANQQL) are enriched in low complexity. In terms of domain architecture, TAFH spans 120-215 (ARQLSKLKRF…NPAQYLAQHE (96 aa)). The interval 230–298 (SELLLDVNEN…LPHPTPPPPQ (69 aa)) is disordered. Basic and acidic residues predominate over residues 238–264 (ENGKRRTPDRTKENGFDREPLHSEHPS). The span at 271–285 (SPGQRYSPNNGLSYQ) shows a compositional bias: polar residues. The span at 289–298 (LPHPTPPPPQ) shows a compositional bias: pro residues. The important for oligomerization stretch occupies residues 337-383 (QEEMIDHRLTDREWAEEWKHLDHLLNCIMDMVEKTRRSLTVLRRCQE). A nervy homology region 2 (NHR2) region spans residues 337–383 (QEEMIDHRLTDREWAEEWKHLDHLLNCIMDMVEKTRRSLTVLRRCQE). The tract at residues 401–423 (DLKKGGGSSSSHSRQQSPVNPDP) is disordered. The residue at position 417 (S417) is a Phosphoserine. The tract at residues 443–492 (EEIWKKAEEAVNEVKRQAMTELQKAVSEAERKAHDMITTERAKMERTVAE) is nervy homology region 3 (NHR3). Residues C515, C518, C526, C529, C535, C539, H547, and C551 each coordinate Zn(2+). Residues 515-551 (CWNCGRKASETCSGCNTARYCGSFCQHKDWEKHHHIC) form an MYND-type zinc finger. Residues 557-576 (AQQQGDTPAVSSSVTPNSGA) are compositionally biased toward polar residues. The segment at 557-604 (AQQQGDTPAVSSSVTPNSGAGSPMDTPPAATPRSTTPGTPSTIETTPR) is disordered. The segment covering 587–604 (TPRSTTPGTPSTIETTPR) has biased composition (low complexity).

The protein belongs to the CBFA2T family. In terms of assembly, homooligomer. Homotetramerization is mediated by nervy homology region 2 (NRH2). Can interact with CBFA2T2 and CBFA2T3; heterotetramerization between members of the CBFA2T family is proposed. Interacts with TCF12, SIN3A, HDAC1, HDAC2, HDAC3, NCOR1, NCOR2. Interacts with ATN1 (via its N-terminus); the interaction enhances the transcriptional repression. Interacts (via its N-terminus) with ZBTB16; the interaction increases the transcription repression activity of ZBTB16. AML1-MTG8/ETO fusion protein interacts with CBFB. AML1-MTG8/ETO is part of a stable transcription factor complex AETFC in leukemic cells; AETFC formation seems to be involved in recruitment of EP300. AML1-MTG8/ETO nervy homology region 2-mediated oligomerization is proposed to be homotypic, required for AML1-MTG8/ETO-mediated transformation of primary hematopoietic cells and is required for AML1-MTG8/ETO interaction with TCF12. In terms of tissue distribution, most abundantly expressed in brain. Lower levels in lung, heart, testis and ovary.

It is found in the nucleus. Functionally, transcriptional corepressor which facilitates transcriptional repression via its association with DNA-binding transcription factors and recruitment of other corepressors and histone-modifying enzymes. Can repress the expression of MMP7 in a ZBTB33-dependent manner. Can repress transactivation mediated by TCF12. Acts as a negative regulator of adipogenesis. The AML1-MTG8/ETO fusion protein frequently found in leukemic cells is involved in leukemogenesis and contributes to hematopoietic stem/progenitor cell self-renewal. The chain is Protein CBFA2T1 (RUNX1T1) from Homo sapiens (Human).